The primary structure comprises 921 residues: Valine--tRNA ligase (921 aa).

The short motif at 40-50 (PNVTGSLHMGH) is the 'HIGH' region element. A 'KMSKS' region motif is present at residues 522 to 526 (KMSKS). Lys-525 is a binding site for ATP. Positions 849–921 (MADLIDKEAE…LQHKNRIESL (73 aa)) form a coiled coil.

Belongs to the class-I aminoacyl-tRNA synthetase family. ValS type 1 subfamily. In terms of assembly, monomer.

The protein resides in the cytoplasm. The enzyme catalyses tRNA(Val) + L-valine + ATP = L-valyl-tRNA(Val) + AMP + diphosphate. Catalyzes the attachment of valine to tRNA(Val). As ValRS can inadvertently accommodate and process structurally similar amino acids such as threonine, to avoid such errors, it has a 'posttransfer' editing activity that hydrolyzes mischarged Thr-tRNA(Val) in a tRNA-dependent manner. This is Valine--tRNA ligase from Legionella pneumophila (strain Lens).